We begin with the raw amino-acid sequence, 457 residues long: Acetylcholine receptor subunit alpha-1-A (457 aa).

The first 20 residues, 1–20 (MDFVLTRLILLFLAATIIYS), serve as a signal peptide directing secretion. Topologically, residues 21–230 (SEDESRLIND…ITYHFLLQRL (210 aa)) are extracellular. 2 disulfides stabilise this stretch: C148-C162 and C212-C213. N161 is a glycosylation site (N-linked (GlcNAc...) asparagine). A run of 3 helical transmembrane segments spans residues 231-255 (PLYF…VFYL), 263-281 (ITLS…LVIV), and 297-316 (YMLF…VIVI). At 317–428 (NTHHRSPSTH…WKFVAMVLDH (112 aa)) the chain is on the cytoplasmic side. Residues 429-447 (LLLAVFMIVCIIGTLAIFA) traverse the membrane as a helical segment.

It belongs to the ligand-gated ion channel (TC 1.A.9) family. Acetylcholine receptor (TC 1.A.9.1) subfamily. Alpha-1/CHRNA1 sub-subfamily. One of the alpha chains that assemble within the acetylcholine receptor, a pentamer of two alpha chains, a beta, a delta, and a gamma or epsilon chains. As to expression, oocytes.

It is found in the postsynaptic cell membrane. Its subcellular location is the cell membrane. The catalysed reaction is K(+)(in) = K(+)(out). It carries out the reaction Na(+)(in) = Na(+)(out). Its function is as follows. Upon acetylcholine binding, the AChR responds by an extensive change in conformation that affects all subunits and leads to opening of an ion-conducting channel across the plasma membrane. The sequence is that of Acetylcholine receptor subunit alpha-1-A (chrna1-a) from Xenopus laevis (African clawed frog).